We begin with the raw amino-acid sequence, 214 residues long: Thiamine import ATP-binding protein ThiQ (214 aa).

Residues 2–212 (IKLNTIFDYP…KNGQATEREI (211 aa)) enclose the ABC transporter domain. 31–38 (GESGAGKS) serves as a coordination point for ATP.

Belongs to the ABC transporter superfamily. Thiamine importer (TC 3.A.1.19.1) family. The complex is composed of two ATP-binding proteins (ThiQ), two transmembrane proteins (ThiP) and a solute-binding protein (ThiB).

It localises to the cell inner membrane. The enzyme catalyses thiamine(out) + ATP + H2O = thiamine(in) + ADP + phosphate + H(+). Functionally, part of the ABC transporter complex ThiBPQ involved in thiamine import. Responsible for energy coupling to the transport system. The polypeptide is Thiamine import ATP-binding protein ThiQ (Histophilus somni (strain 129Pt) (Haemophilus somnus)).